The following is a 330-amino-acid chain: Ferredoxin--NADP reductase (330 aa).

FAD-binding residues include Glu-35, Gln-43, Tyr-48, Val-90, Phe-123, Asp-285, and Thr-326.

Belongs to the ferredoxin--NADP reductase type 2 family. As to quaternary structure, homodimer. It depends on FAD as a cofactor.

It catalyses the reaction 2 reduced [2Fe-2S]-[ferredoxin] + NADP(+) + H(+) = 2 oxidized [2Fe-2S]-[ferredoxin] + NADPH. The protein is Ferredoxin--NADP reductase of Streptococcus pyogenes serotype M1.